Here is a 395-residue protein sequence, read N- to C-terminus: Imidazolonepropionase (395 aa).

Fe(3+)-binding residues include H63 and H65. Zn(2+) contacts are provided by H63 and H65. The 4-imidazolone-5-propanoate site is built by R72, Y135, and H168. Y135 is an N-formimidoyl-L-glutamate binding site. H233 is a Fe(3+) binding site. H233 lines the Zn(2+) pocket. Q236 contributes to the 4-imidazolone-5-propanoate binding site. D308 lines the Fe(3+) pocket. D308 serves as a coordination point for Zn(2+). Positions 310 and 312 each coordinate N-formimidoyl-L-glutamate. T313 is a 4-imidazolone-5-propanoate binding site.

It belongs to the metallo-dependent hydrolases superfamily. HutI family. Requires Zn(2+) as cofactor. The cofactor is Fe(3+).

Its subcellular location is the cytoplasm. The enzyme catalyses 4-imidazolone-5-propanoate + H2O = N-formimidoyl-L-glutamate. The protein operates within amino-acid degradation; L-histidine degradation into L-glutamate; N-formimidoyl-L-glutamate from L-histidine: step 3/3. Functionally, catalyzes the hydrolytic cleavage of the carbon-nitrogen bond in imidazolone-5-propanoate to yield N-formimidoyl-L-glutamate. It is the third step in the universal histidine degradation pathway. In Cereibacter sphaeroides (strain KD131 / KCTC 12085) (Rhodobacter sphaeroides), this protein is Imidazolonepropionase.